The chain runs to 101 residues: Large ribosomal subunit protein bL28 (101 aa).

It belongs to the bacterial ribosomal protein bL28 family.

The chain is Large ribosomal subunit protein bL28 from Caulobacter sp. (strain K31).